The primary structure comprises 89 residues: Class II hydrophobin 2 (89 aa).

An N-terminal signal peptide occupies residues 1-15 (MKLYIAAALLTLGLA). Disulfide bonds link Cys34–Cys74, Cys45–Cys66, Cys46–Cys58, and Cys75–Cys86.

It belongs to the cerato-ulmin hydrophobin family. As to quaternary structure, homodimer. Homodimers further self-assemble to form highly ordered films at water-air interfaces through intermolecular interactions.

The protein resides in the secreted. The protein localises to the cell wall. In terms of biological role, aerial growth, conidiation, and dispersal of filamentous fungi in the environment rely upon a capability of their secreting small amphipathic proteins called hydrophobins (HPBs) with low sequence identity. Class I can self-assemble into an outermost layer of rodlet bundles on aerial cell surfaces, conferring cellular hydrophobicity that supports fungal growth, development and dispersal; whereas Class II form highly ordered films at water-air interfaces through intermolecular interactions but contribute nothing to the rodlet structure. The sequence is that of Class II hydrophobin 2 from Trichoderma asperellum (strain ATCC 204424 / CBS 433.97 / NBRC 101777).